The following is a 280-amino-acid chain: Golgi phosphoprotein 3-like A (280 aa).

The interval 1 to 32 (MTTLIRRGRRAEEGQERRADSEDSIKDKDEEE) is disordered. Over residues 10–32 (RAEEGQERRADSEDSIKDKDEEE) the composition is skewed to basic and acidic residues. 4 residues coordinate a 1,2-diacyl-sn-glycero-3-phospho-(1D-myo-inositol 4-phosphate): Trp-62, Arg-71, Arg-152, and Arg-155. The interval 171 to 182 (EKQNFLLFDMTT) is beta-hairpin required for oligomerization.

It belongs to the GOLPH3/VPS74 family. As to quaternary structure, homooligomer.

It localises to the golgi apparatus. It is found in the golgi stack membrane. The protein localises to the trans-Golgi network membrane. In terms of biological role, phosphatidylinositol-4-phosphate-binding protein that may play a role in the process of vesicle budding at the Golgi and anterograde transport to the plasma membrane. This chain is Golgi phosphoprotein 3-like A (golph3l-a), found in Xenopus laevis (African clawed frog).